The sequence spans 88 residues: Translation initiation factor IF-1 1 (88 aa).

Positions 1 to 72 (MAKEELIELD…TKGRINFRHK (72 aa)) constitute an S1-like domain.

It belongs to the IF-1 family. In terms of assembly, component of the 30S ribosomal translation pre-initiation complex which assembles on the 30S ribosome in the order IF-2 and IF-3, IF-1 and N-formylmethionyl-tRNA(fMet); mRNA recruitment can occur at any time during PIC assembly.

It is found in the cytoplasm. Its function is as follows. One of the essential components for the initiation of protein synthesis. Stabilizes the binding of IF-2 and IF-3 on the 30S subunit to which N-formylmethionyl-tRNA(fMet) subsequently binds. Helps modulate mRNA selection, yielding the 30S pre-initiation complex (PIC). Upon addition of the 50S ribosomal subunit IF-1, IF-2 and IF-3 are released leaving the mature 70S translation initiation complex. This Burkholderia mallei (strain ATCC 23344) protein is Translation initiation factor IF-1 1.